The primary structure comprises 493 residues: BICD family-like cargo adapter 2 (493 aa).

Coiled-coil stretches lie at residues E56 to M275 and M365 to T431.

It belongs to the BICDR family.

The sequence is that of BICD family-like cargo adapter 2 (bicdl2) from Xenopus laevis (African clawed frog).